We begin with the raw amino-acid sequence, 360 residues long: MPSPCESGKTTNCSGAPSSSCAKSVECCKKQLSVGVLQQVSASSSGAIVTSLFMTPLDVVKIRLQQQTRPFPKGECFYYHNGLMEHVCVSCEVRKPCEWYQRPGNFRGTADAIVKIARHEGIRSLWSGLSPTMVMALPATVFYFTTYDNLSVWLKKKMCCRRAFSPEKWTPPDWSAAAVAGIVARTIAVTVVSPIEMIRTKMQSKRLTYHEIGHLVRSSMATKGISSFYLGWTPTMLRDIPFSGIYWAGYDLFKTNLQRRQGPDHNPFVVSFVSGAAAGVVASIFTHPFDVIKTNCQIRIGGSIDDMNKSITTVIKDMYHSRGISAFSSGLVPRLVKVSPSCAIMISFYEYFKFLFQKNH.

3 Solcar repeats span residues 34 to 153, 172 to 256, and 266 to 355; these read VGVL…LSVW, PDWS…FKTN, and NPFV…FKFL. Helical transmembrane passes span 40–60, 125–145, 178–198, 225–247, 269–289, and 327–348; these read VSASSSGAIVTSLFMTPLDVV, LWSGLSPTMVMALPATVFYFT, AVAGIVARTIAVTVVSPIEMI, ISSFYLGWTPTMLRDIPFSGIYW, VVSFVSGAAAGVVASIFTHPF, and FSSGLVPRLVKVSPSCAIMISF.

The protein belongs to the mitochondrial carrier (TC 2.A.29) family.

It localises to the mitochondrion inner membrane. This is an uncharacterized protein from Caenorhabditis elegans.